A 747-amino-acid polypeptide reads, in one-letter code: Small G protein signaling modulator 3 (747 aa).

Residues 111–302 (GVPHSMRPQL…RLWDLFFYEG (192 aa)) form the Rab-GAP TBC domain. S403 is modified (phosphoserine). Residues 412–435 (EDDLEAMKAKNIKQTELVADLREA) adopt a coiled-coil conformation. One can recognise an SH3 domain in the interval 477–536 (GHPRRAKALLDFERHDDDELGFRKNDIITIVSQKDEHCWVGELNGLRGWFPAKFVEVLDE). The 164-residue stretch at 552–715 (GVTDLVRGTL…FAFSLSQDWE (164 aa)) folds into the RUN domain.

The protein belongs to the small G protein signaling modulator family. As to quaternary structure, interacts with GJA1. Interaction with GJA1 induces its degradation. Interacts via its RUN domain with the C-terminal region of NF2. Interacts with RAB3A, RAB4A, RAB5A, RAB8A, RAB11A, RAP1A, RAP1B, RAP2A, RAP2B and PDCD6I. No interaction with RAB27A.

The protein localises to the cytoplasm. Functionally, may play a cooperative role in NF2-mediated growth suppression of cells. In Bos taurus (Bovine), this protein is Small G protein signaling modulator 3.